The primary structure comprises 407 residues: Indoleamine 2,3-dioxygenase 1 (407 aa).

H350 is a heme b binding site. Residues 362–388 are disordered; that stretch reads SKQKPMGGHKSEEPSNTENRGTGGTDV.

Belongs to the indoleamine 2,3-dioxygenase family. As to quaternary structure, monomer. It depends on heme b as a cofactor.

The protein resides in the cytoplasm. It is found in the cytosol. The catalysed reaction is D-tryptophan + O2 = N-formyl-D-kynurenine. It catalyses the reaction L-tryptophan + O2 = N-formyl-L-kynurenine. With respect to regulation, activity is inhibited by and MTH-trp (methylthiohydantoin-DL-tryptophan), modestly inhibited by L-1MT (1-methyl-L-tryptophan) but not D-1MT (1-methyl-D-tryptophan). Its function is as follows. Catalyzes the first and rate limiting step of the catabolism of the essential amino acid tryptophan along the kynurenine pathway. Involved in the peripheral immune tolerance, contributing to maintain homeostasis by preventing autoimmunity or immunopathology that would result from uncontrolled and overreacting immune responses. Tryptophan shortage inhibits T lymphocytes division and accumulation of tryptophan catabolites induces T-cell apoptosis and differentiation of regulatory T-cells. Acts as a suppressor of anti-tumor immunity. Limits the growth of intracellular pathogens by depriving tryptophan. Protects the fetus from maternal immune rejection. The sequence is that of Indoleamine 2,3-dioxygenase 1 from Rattus norvegicus (Rat).